Consider the following 75-residue polypeptide: Small ribosomal subunit protein bS18 (75 aa).

It belongs to the bacterial ribosomal protein bS18 family. As to quaternary structure, part of the 30S ribosomal subunit. Forms a tight heterodimer with protein bS6.

Its function is as follows. Binds as a heterodimer with protein bS6 to the central domain of the 16S rRNA, where it helps stabilize the platform of the 30S subunit. The chain is Small ribosomal subunit protein bS18 from Buchnera aphidicola subsp. Cinara cedri (strain Cc).